The primary structure comprises 173 residues: Large ribosomal subunit protein uL22c (173 aa).

The protein belongs to the universal ribosomal protein uL22 family. In terms of assembly, part of the 50S ribosomal subunit.

It localises to the plastid. The protein resides in the chloroplast. This protein binds specifically to 23S rRNA. In terms of biological role, the globular domain of the protein is located near the polypeptide exit tunnel on the outside of the subunit, while an extended beta-hairpin is found that lines the wall of the exit tunnel in the center of the 70S ribosome. This is Large ribosomal subunit protein uL22c (rpl22) from Drimys granadensis.